A 264-amino-acid polypeptide reads, in one-letter code: Tritrans,polycis-undecaprenyl-diphosphate synthase (geranylgeranyl-diphosphate specific) (264 aa).

The active site involves Asp43. Asp43 is a Mg(2+) binding site. Residues 44 to 47 (GNRR), Trp48, His60, and 88 to 90 (STE) each bind substrate. Residue Asn91 is the Proton acceptor of the active site. Substrate contacts are provided by residues Phe92, Arg94, Arg213, and 219 to 221 (RIS). Glu232 serves as a coordination point for Mg(2+).

Belongs to the UPP synthase family. In terms of assembly, homodimer. The cofactor is Mg(2+).

The enzyme catalyses geranylgeranyl diphosphate + 7 isopentenyl diphosphate = tri-trans,hepta-cis-undecaprenyl diphosphate + 7 diphosphate. Its function is as follows. Catalyzes the sequential condensation of isopentenyl diphosphate (IPP) with geranylgeranyl diphosphate (GGPP) to yield (2Z,6Z,10Z,14Z,18Z,22Z,26Z,30E,34E,38E)-undecaprenyl diphosphate (tritrans,heptacis-UPP). It is probably the precursor of glycosyl carrier lipids. This chain is Tritrans,polycis-undecaprenyl-diphosphate synthase (geranylgeranyl-diphosphate specific), found in Thermococcus kodakarensis (strain ATCC BAA-918 / JCM 12380 / KOD1) (Pyrococcus kodakaraensis (strain KOD1)).